Reading from the N-terminus, the 396-residue chain is Elongation factor Tu (396 aa).

Positions 10 to 206 (KPHCNIGTIG…QVDAYIPQPE (197 aa)) constitute a tr-type G domain. Positions 19–26 (GHVDHGKT) are G1. 19-26 (GHVDHGKT) contacts GTP. Thr26 contributes to the Mg(2+) binding site. The G2 stretch occupies residues 60-64 (GITIS). The G3 stretch occupies residues 81–84 (DCPG). GTP-binding positions include 81-85 (DCPGH) and 136-139 (NKVD). The interval 136 to 139 (NKVD) is G4. Residues 174-176 (SAL) are G5.

This sequence belongs to the TRAFAC class translation factor GTPase superfamily. Classic translation factor GTPase family. EF-Tu/EF-1A subfamily. As to quaternary structure, monomer.

The protein resides in the cytoplasm. It carries out the reaction GTP + H2O = GDP + phosphate + H(+). Functionally, GTP hydrolase that promotes the GTP-dependent binding of aminoacyl-tRNA to the A-site of ribosomes during protein biosynthesis. This is Elongation factor Tu from Gluconobacter oxydans (strain 621H) (Gluconobacter suboxydans).